Consider the following 41-residue polypeptide: Ornatin-A2 (41 aa).

The Cell attachment site motif lies at 33 to 35 (RGD).

Belongs to the ornatin family.

The protein localises to the secreted. Potent inhibitor of fibrinogen interaction with platelet receptors expressed on glycoprotein IIb-IIIa complex. May prevent blood from clotting during either feeding and/or storage of ingested blood. This Placobdella ornata (Turtle leech) protein is Ornatin-A2.